Reading from the N-terminus, the 145-residue chain is MLVPTRVKHRKQHRGRMHGKATRGNVITFGEYGLVAMEPAWITNRQIEAARIAMTRYIKRGGKVWIKIFPDKPITAKPAETRMGSGKGSPEYWVAVVKPGRVMFELAGVPEEIAKEALRLAMHKLPVKCKIVRREELEGGDANEN.

Belongs to the universal ribosomal protein uL16 family. As to quaternary structure, part of the 50S ribosomal subunit.

Binds 23S rRNA and is also seen to make contacts with the A and possibly P site tRNAs. This chain is Large ribosomal subunit protein uL16, found in Desulfitobacterium hafniense (strain DSM 10664 / DCB-2).